A 400-amino-acid chain; its full sequence is Phosphoglycerate kinase (400 aa).

Residues 21 to 23 (DFN), R36, 59 to 62 (HCSR), R118, and R151 contribute to the substrate site. Residues K201, E323, and 353-356 (GGDT) each bind ATP.

The protein belongs to the phosphoglycerate kinase family. As to quaternary structure, monomer.

It localises to the cytoplasm. The catalysed reaction is (2R)-3-phosphoglycerate + ATP = (2R)-3-phospho-glyceroyl phosphate + ADP. The protein operates within carbohydrate degradation; glycolysis; pyruvate from D-glyceraldehyde 3-phosphate: step 2/5. This Bartonella bacilliformis (strain ATCC 35685 / KC583 / Herrer 020/F12,63) protein is Phosphoglycerate kinase.